The following is a 184-amino-acid chain: UPF0397 protein SAB2561c (184 aa).

5 consecutive transmembrane segments (helical) span residues 11 to 31, 44 to 64, 77 to 97, 111 to 131, and 148 to 168; these read VVAI…VVIP, AFLA…TGLV, AWWS…WIGL, MIYF…LIAP, and QGVI…TILL.

The protein belongs to the UPF0397 family.

It is found in the cell membrane. The polypeptide is UPF0397 protein SAB2561c (Staphylococcus aureus (strain bovine RF122 / ET3-1)).